The following is a 534-amino-acid chain: CTP synthase (534 aa).

An amidoligase domain region spans residues 1-267 (MSKYIVVTGG…GSYILNRLNI (267 aa)). S13 contacts CTP. S13 provides a ligand contact to UTP. 14–19 (SIGKGI) is an ATP binding site. Position 54 (Y54) interacts with L-glutamine. D71 serves as a coordination point for ATP. Mg(2+) contacts are provided by D71 and E141. CTP contacts are provided by residues 148 to 150 (DIE), 188 to 193 (KTKPTQ), and K224. UTP contacts are provided by residues 188 to 193 (KTKPTQ) and K224. One can recognise a Glutamine amidotransferase type-1 domain in the interval 294–532 (KIAVVGKYIE…IKAAKNKKQN (239 aa)). Position 353 (G353) interacts with L-glutamine. The active-site Nucleophile; for glutamine hydrolysis is C380. Residues 381-384 (LGLH), E403, and R460 contribute to the L-glutamine site. Catalysis depends on residues H505 and E507.

It belongs to the CTP synthase family. Homotetramer.

It carries out the reaction UTP + L-glutamine + ATP + H2O = CTP + L-glutamate + ADP + phosphate + 2 H(+). The enzyme catalyses L-glutamine + H2O = L-glutamate + NH4(+). The catalysed reaction is UTP + NH4(+) + ATP = CTP + ADP + phosphate + 2 H(+). Its pathway is pyrimidine metabolism; CTP biosynthesis via de novo pathway; CTP from UDP: step 2/2. Its activity is regulated as follows. Allosterically activated by GTP, when glutamine is the substrate; GTP has no effect on the reaction when ammonia is the substrate. The allosteric effector GTP functions by stabilizing the protein conformation that binds the tetrahedral intermediate(s) formed during glutamine hydrolysis. Inhibited by the product CTP, via allosteric rather than competitive inhibition. In terms of biological role, catalyzes the ATP-dependent amination of UTP to CTP with either L-glutamine or ammonia as the source of nitrogen. Regulates intracellular CTP levels through interactions with the four ribonucleotide triphosphates. This Methanosphaera stadtmanae (strain ATCC 43021 / DSM 3091 / JCM 11832 / MCB-3) protein is CTP synthase.